We begin with the raw amino-acid sequence, 218 residues long: Probable 3-keto-L-gulonate-6-phosphate decarboxylase (218 aa).

A substrate-binding site is contributed by Asp-11. Mg(2+)-binding residues include Glu-33 and Asp-62. Residue Arg-194 coordinates substrate.

Belongs to the HPS/KGPDC family. KGPDC subfamily. It depends on Mg(2+) as a cofactor.

It carries out the reaction 3-dehydro-L-gulonate 6-phosphate + H(+) = L-xylulose 5-phosphate + CO2. It functions in the pathway cofactor degradation; L-ascorbate degradation; D-xylulose 5-phosphate from L-ascorbate: step 2/4. Functionally, catalyzes the decarboxylation of 3-keto-L-gulonate-6-P into L-xylulose-5-P. Is involved in the anaerobic L-ascorbate utilization. The sequence is that of Probable 3-keto-L-gulonate-6-phosphate decarboxylase (ulaD) from Mycoplasma pneumoniae (strain ATCC 29342 / M129 / Subtype 1) (Mycoplasmoides pneumoniae).